Reading from the N-terminus, the 652-residue chain is DNA ligase (652 aa).

NAD(+) is bound by residues 29–33, 78–79, and Glu107; these read DSEYD and SL. Lys109 (N6-AMP-lysine intermediate) is an active-site residue. Arg130, Glu164, Lys278, and Lys302 together coordinate NAD(+). Zn(2+)-binding residues include Cys395, Cys398, Cys413, and Cys418. The region spanning 577-652 is the BRCT domain; the sequence is VADAALSGLT…VRDEAWLESL (76 aa).

This sequence belongs to the NAD-dependent DNA ligase family. LigA subfamily. It depends on Mg(2+) as a cofactor. The cofactor is Mn(2+).

It carries out the reaction NAD(+) + (deoxyribonucleotide)n-3'-hydroxyl + 5'-phospho-(deoxyribonucleotide)m = (deoxyribonucleotide)n+m + AMP + beta-nicotinamide D-nucleotide.. Functionally, DNA ligase that catalyzes the formation of phosphodiester linkages between 5'-phosphoryl and 3'-hydroxyl groups in double-stranded DNA using NAD as a coenzyme and as the energy source for the reaction. It is essential for DNA replication and repair of damaged DNA. In Streptococcus pneumoniae (strain Hungary19A-6), this protein is DNA ligase.